The chain runs to 65 residues: Metallothionein-B (65 aa).

It belongs to the metallothionein superfamily. Type 4 family.

Functionally, metallothioneins have a high content of cysteine residues that bind various heavy metals. The chain is Metallothionein-B (MTB1) from Strongylocentrotus purpuratus (Purple sea urchin).